The chain runs to 174 residues: Cathepsin B-like cysteine proteinase 3 (174 aa).

Intrachain disulfides connect Cys22-Cys55 and Cys30-Cys42. Active-site residues include His122 and Asn142.

It belongs to the peptidase C1 family.

In terms of biological role, expression of the protease correlates with blood-feeding and suggests a role for the protease in blood digestion. This is Cathepsin B-like cysteine proteinase 3 (CP-3) from Ostertagia ostertagi (Brown stomach worm).